The chain runs to 65 residues: MLLSAVSFAKSKSKTILVKLVSQAGTGFSFNHKRSRLREKLSLLHYDPIVNKKVLFVEQKKIRSL.

Residues 1 to 8 (MLLSAVSF) constitute a mitochondrion transit peptide.

This sequence belongs to the bacterial ribosomal protein bL33 family. In terms of assembly, component of the mitochondrial ribosome large subunit (39S) which comprises a 16S rRNA and about 50 distinct proteins.

It localises to the mitochondrion. The protein is Large ribosomal subunit protein bL33m (Mrpl33) of Mus musculus (Mouse).